A 364-amino-acid chain; its full sequence is D-alanine--D-alanine ligase (364 aa).

Positions 141-346 (KNLFAQAGLR…YSELIERLIA (206 aa)) constitute an ATP-grasp domain. 174–229 (EQELGYPCFVKPANAGSSVGISKCKQRDDLKTAFAEAFKYDRKIIIEESIVGREIE) lines the ATP pocket. Aspartate 300, glutamate 313, and asparagine 315 together coordinate Mg(2+).

The protein belongs to the D-alanine--D-alanine ligase family. The cofactor is Mg(2+). Requires Mn(2+) as cofactor.

The protein localises to the cytoplasm. The catalysed reaction is 2 D-alanine + ATP = D-alanyl-D-alanine + ADP + phosphate + H(+). Its pathway is cell wall biogenesis; peptidoglycan biosynthesis. Functionally, cell wall formation. The chain is D-alanine--D-alanine ligase from Geobacillus thermodenitrificans (strain NG80-2).